The chain runs to 317 residues: R2-like ligand binding oxidase (317 aa).

Residues Glu73, Glu106, and His109 each coordinate Mn(2+). Positions 76 to 167 (VTQDLQPFMA…ANQVRASVTY (92 aa)) form a cross-link, 3-(O4'-tyrosyl)-valine (Val-Tyr). A Fe cation-binding site is contributed by Glu106. Fe cation-binding residues include Glu172, Glu207, and His210.

The protein belongs to the ribonucleoside diphosphate reductase small chain family. R2-like ligand binding oxidase subfamily. As to quaternary structure, homodimer. Fe cation is required as a cofactor. Mn(2+) serves as cofactor.

Its function is as follows. Probable oxidase. This Saccharopolyspora erythraea (strain ATCC 11635 / DSM 40517 / JCM 4748 / NBRC 13426 / NCIMB 8594 / NRRL 2338) protein is R2-like ligand binding oxidase.